The chain runs to 509 residues: Putative ATP-dependent RNA helicase QP509L (509 aa).

Residues 110–262 (KKLLPPYGRF…KIIIHHLGQP (153 aa)) enclose the Helicase ATP-binding domain. 123–130 (LNTGLGKT) provides a ligand contact to ATP. The short motif at 215-218 (DEAH) is the DEAH box element.

This sequence belongs to the DEAD box helicase family. DEAH subfamily.

The catalysed reaction is ATP + H2O = ADP + phosphate + H(+). The polypeptide is Putative ATP-dependent RNA helicase QP509L (African swine fever virus (isolate Tick/Malawi/Lil 20-1/1983) (ASFV)).